A 593-amino-acid polypeptide reads, in one-letter code: Progranulin (593 aa).

The signal sequence occupies residues 1–17 (MWTLVSWVALTAGLVAG). N-linked (GlcNAc...) asparagine glycosylation is present at Asn-118. 2 cysteine pairs are disulfide-bonded: Cys-126–Cys-139 and Cys-133–Cys-149. Residues Asn-236 and Asn-265 are each glycosylated (N-linked (GlcNAc...) asparagine). 10 disulfide bridges follow: Cys-284–Cys-296, Cys-290–Cys-306, Cys-297–Cys-314, Cys-307–Cys-321, Cys-315–Cys-328, Cys-322–Cys-335, Cys-366–Cys-378, Cys-372–Cys-388, Cys-397–Cys-410, and Cys-404–Cys-416. N-linked (GlcNAc...) asparagine glycosylation is present at Asn-368. Asn-530 carries an N-linked (GlcNAc...) asparagine glycan.

The protein belongs to the granulin family. In terms of assembly, progranulin is secreted as a homodimer. Interacts with SLPI; interaction protects progranulin from proteolysis. Interacts (via region corresponding to granulin-7 peptide) with CTSD; stabilizes CTSD and increases its proteolytic activity. Interacts (via region corresponding to granulin-7 peptide) with SORT1; this interaction mediates endocytosis and lysosome delivery of progranulin; interaction occurs at the neuronal cell surface in a stressed nervous system. Interacts with PSAP; facilitates lysosomal delivery of progranulin from the extracellular space and the biosynthetic pathway. Forms a complex with PSAP and M6PR; PSAP bridges the binding between progranulin and M6PR. Forms a complex with PSAP and SORT1; progranulin bridges the interaction between PSAP and SORT1; facilitates lysosomal targeting of PSAP via SORT1; interaction enhances PSAP uptake in primary cortical neurons. Interacts (via regions corresponding to granulin-2 and granulin-7 peptides) with GBA1; this interaction prevents aggregation of GBA1-SCARB2 complex via interaction with HSPA1A upon stress. Interacts (via region corresponding to granulin-7 peptide) with HSPA1A; mediates recruitment of HSPA1A to GBA1 and prevents GBA1 aggregation in response to stress. In terms of processing, cleaved by ELANE; proteolysis is blocked by SLPI and is concentration- and time-dependent and induces CXCL8/IL-8 production; granulin-3 and granulin-4 are resistant to ELANE. Cleaved by CTSL in lysosome thus regulating the maturation and turnover of progranulin within the lysosome. In terms of tissue distribution, in myelogenous leukemic cell lines of promonocytic, promyelocytic, and proerythroid lineage, in fibroblasts, and very strongly in epithelial cell lines. Present in inflammatory cells and bone marrow. Highest levels in kidney.

It localises to the secreted. The protein resides in the lysosome. In terms of biological role, secreted protein that acts as a key regulator of lysosomal function and as a growth factor involved in inflammation, wound healing and cell proliferation. Regulates protein trafficking to lysosomes, and also the activity of lysosomal enzymes. Also facilitates the acidification of lysosomes, causing degradation of mature CTSD by CTSB. In addition, functions as a wound-related growth factor that acts directly on dermal fibroblasts and endothelial cells to promote division, migration and the formation of capillary-like tubule structures. Also promotes epithelial cell proliferation by blocking TNF-mediated neutrophil activation preventing release of oxidants and proteases. Moreover, modulates inflammation in neurons by preserving neurons survival, axonal outgrowth and neuronal integrity. Functionally, promotes proliferation of the epithelial cell line A431 in culture. Inhibits epithelial cell proliferation and induces epithelial cells to secrete IL-8. Its function is as follows. Stabilizes CTSD through interaction with CTSD leading to maintain its aspartic-type peptidase activity. The polypeptide is Progranulin (Homo sapiens (Human)).